Consider the following 37-residue polypeptide: MKVRPSVKPICEKCKVIRRRGKVMVICENPKHKQRQG.

This sequence belongs to the bacterial ribosomal protein bL36 family.

This is Large ribosomal subunit protein bL36 (rpmJ) from Geobacillus stearothermophilus (Bacillus stearothermophilus).